A 1212-amino-acid chain; its full sequence is Solute carrier family 12 member 2 (1212 aa).

M1 bears the N-acetylmethionine mark. The Cytoplasmic segment spans residues 1–286 (MEPRPTAPSS…AESKGVVKFG (286 aa)). Disordered regions lie at residues 36-81 (GTAV…QSRF), 112-138 (GAKQ…AKGR), and 150-193 (SSAE…GGGS). Phosphoserine occurs at positions 77 and 79. The short motif at 80–83 (RFQV) is the RFXV motif 1 element. A compositionally biased stretch (basic and acidic residues) spans 127-137 (EPAKGSEEAKG). Positions 138–141 (RFRV) match the RFXV motif 2 motif. A compositionally biased stretch (low complexity) spans 150-160 (SSAEDSLSDAA). 3 positions are modified to phosphothreonine; by OXSR1 and STK39: T203, T207, and T212. 2 positions are modified to phosphothreonine: T217 and T230. S242 is modified (phosphoserine). At T266 the chain carries Phosphothreonine. Residues 287–316 (WIKGVLVRCMLNIWGVMLFIRLSWIVGQAG) traverse the membrane as a discontinuously helical segment. L297 serves as a coordination point for Na(+). K(+) contacts are provided by N298 and I299. Residue W300 participates in Na(+) binding. Residues G301, V302, and M303 each contribute to the chloride site. Residues 317-336 (IGLSVLVIMMATVVTTITGL) traverse the membrane as a helical segment. Residues 337-367 (STSAIATNGFVRGGGAYYLISRSLGPEFGGA) lie on the Cytoplasmic side of the membrane. A helical membrane pass occupies residues 368-395 (IGLIFAFANAVAVAMYVVGFAETVVELL). F372 contacts chloride. A K(+)-binding site is contributed by Y383. Residues 396–405 (KEHSILMIDE) lie on the Extracellular side of the membrane. The chain crosses the membrane as a helical span at residues 406 to 429 (INDIRIIGAITVVILLGISVAGME). The Cytoplasmic portion of the chain corresponds to 430-432 (WEA). A helical transmembrane segment spans residues 433–454 (KAQIVLLVILLLAIGDFVIGTF). The Extracellular segment spans residues 455–486 (IPLESKKPKGFFGYKSEIFNENFGPDFREEET). A discontinuously helical membrane pass occupies residues 487-504 (FFSVFAIFFPAATGILAG). K(+) contacts are provided by P496, A497, and T499. Residues P496 and A497 each contribute to the chloride site. Chloride contacts are provided by G500 and I501. The Cytoplasmic segment spans residues 505–519 (ANISGDLADPQSAIP). The chain crosses the membrane as a helical span at residues 520 to 541 (KGTLLAILITTLVYVGIAVSVG). Residues 542 to 598 (SCVVRDATGNVNDTIVTELTNCTSAACKLNFDFSSCESSPCSYGLMNNFQVMSMVSG) lie on the Extracellular side of the membrane. N-linked (GlcNAc...) asparagine glycosylation is found at N553 and N562. Disulfide bonds link C563-C568 and C577-C582. A helical transmembrane segment spans residues 599–623 (FTPLISAGIFSATLSSALASLVSAP). A610, S613, and S614 together coordinate Na(+). The Cytoplasmic portion of the chain corresponds to 624-651 (KIFQALCKDNIYPAFQMFAKGYGKNNEP). 2 helical membrane-spanning segments follow: residues 652 to 672 (LRGY…AELN) and 673 to 691 (VIAP…LINF). Chloride contacts are provided by F682 and Y686. Topologically, residues 692–714 (SVFHASLAKSPGWRPAFKYYNMW) are cytoplasmic. Transmembrane regions (helical) follow at residues 715–732 (ISLL…VINW) and 733–745 (WAAL…VLGL). Residues 746-1212 (YIYVTYKKPD…NHQSVLTFYS (467 aa)) are Cytoplasmic-facing. A scissor helix region spans residues 761-778 (STQALTYLNALQHSIRLS). Phosphoserine occurs at positions 940 and 944. A compositionally biased stretch (basic and acidic residues) spans 962-978 (LDTSKPLSEKPITHKVE). Positions 962 to 989 (LDTSKPLSEKPITHKVEEEDGKTATQPL) are disordered. S994 is modified (phosphoserine).

Belongs to the SLC12A transporter family. In terms of assembly, homodimer; adopts a domain-swap conformation at the scissor helices connecting the transmembrane domain and C-terminal domain. Post-translationally, phosphorylated at Thr-203, Thr-207 and Thr-212 by OXSR1/OSR1 and STK39/SPAK downstream of WNK kinases (WNK1, WNK2, WNK3 or WNK4), promoting its activity. In terms of tissue distribution, expressed in many tissues.

The protein resides in the basolateral cell membrane. The enzyme catalyses K(+)(out) + 2 chloride(out) + Na(+)(out) = K(+)(in) + 2 chloride(in) + Na(+)(in). With respect to regulation, activated following phosphorylation by OXSR1/OSR1 and STK39/SPAK downstream of WNK kinases (WNK1, WNK2, WNK3 or WNK4). Inhibited by bumetanide. Inhibited by furosemide. In terms of biological role, cation-chloride cotransporter which mediates the electroneutral transport of chloride, potassium and/or sodium ions across the membrane. Plays a vital role in the regulation of ionic balance and cell volume. This Homo sapiens (Human) protein is Solute carrier family 12 member 2 (SLC12A2).